The primary structure comprises 578 residues: Protein BONZAI 1 (578 aa).

The N-myristoyl glycine moiety is linked to residue glycine 2. C2 domains are found at residues 26 to 163 and 176 to 303; these read ALGA…TSTL and QPHH…NFSL. Positions 63, 69, 122, and 124 each coordinate Ca(2+). Residues 341–560 enclose the VWFA domain; sequence NFMVAIDFTA…SVVQALLAEL (220 aa).

Belongs to the copine family. In terms of assembly, interacts (via VWA domain) with BAP1 and BAP2. Interacts with HSP70-1 and HSP70-2. Requires Ca(2+) as cofactor. Based on mass spectrometry analysis, the N-peptide must be modified and there might be additional modifications other than myristoylation. In terms of tissue distribution, expressed in roots and flowers and, at higher levels, in leaves and stems. Strongly expressed in growing tissues. Not detected in green siliques.

The protein resides in the cell membrane. Functionally, negative regulator of cell death and defense responses. Negative regulator of several R genes, including SNC1. May have effects in promoting growth and development. May function in membrane trafficking and in fusion of vesicles with plasma membrane at low temperature. Exhibits calcium-dependent phospholipid binding properties. This is Protein BONZAI 1 (BON1) from Arabidopsis thaliana (Mouse-ear cress).